A 722-amino-acid chain; its full sequence is Glycine--tRNA ligase beta subunit (722 aa).

This sequence belongs to the class-II aminoacyl-tRNA synthetase family. Tetramer of two alpha and two beta subunits.

The protein localises to the cytoplasm. It carries out the reaction tRNA(Gly) + glycine + ATP = glycyl-tRNA(Gly) + AMP + diphosphate. The sequence is that of Glycine--tRNA ligase beta subunit (glyS) from Synechocystis sp. (strain ATCC 27184 / PCC 6803 / Kazusa).